The primary structure comprises 86 residues: Large ribosomal subunit protein bL31B (86 aa).

Belongs to the bacterial ribosomal protein bL31 family. Type B subfamily. As to quaternary structure, part of the 50S ribosomal subunit.

The polypeptide is Large ribosomal subunit protein bL31B (Cupriavidus taiwanensis (strain DSM 17343 / BCRC 17206 / CCUG 44338 / CIP 107171 / LMG 19424 / R1) (Ralstonia taiwanensis (strain LMG 19424))).